The primary structure comprises 572 residues: ATP-dependent lipid A-core flippase (572 aa).

The next 5 helical transmembrane spans lie at 14-34, 55-75, 148-168, 249-269, and 272-292; these read IIPYKIPLFIAMFAMIVVAAL, VFFLQILPLIIIAIFFTKGVL, IFLLGVIFYMNWKLALICFLI, MEIIGGFAVAGIIWVGGSEVI, and SATPGTFFAFLTAMITAYDPV. The ABC transmembrane type-1 domain maps to 22–304; sequence FIAMFAMIVV…VSQVNSTIQQ (283 aa). The 234-residue stretch at 338–571 folds into the ABC transporter domain; that stretch reads IEFHDVSFSY…EGEYQLLYNM (234 aa). 370–377 provides a ligand contact to ATP; sequence GPSGGGKT.

This sequence belongs to the ABC transporter superfamily. Lipid exporter (TC 3.A.1.106) family. Homodimer.

Its subcellular location is the cell inner membrane. It carries out the reaction ATP + H2O + lipid A-core oligosaccharideSide 1 = ADP + phosphate + lipid A-core oligosaccharideSide 2.. Functionally, involved in lipopolysaccharide (LPS) biosynthesis. Translocates lipid A-core from the inner to the outer leaflet of the inner membrane. Transmembrane domains (TMD) form a pore in the inner membrane and the ATP-binding domain (NBD) is responsible for energy generation. This Desulfotalea psychrophila (strain LSv54 / DSM 12343) protein is ATP-dependent lipid A-core flippase.